The primary structure comprises 198 residues: Dual specificity protein phosphatase 14 (198 aa).

One can recognise a Tyrosine-protein phosphatase domain in the interval 26 to 167 (GIAQITSSLF…LIDYESQLFG (142 aa)). The active-site Phosphocysteine intermediate is Cys-111.

It belongs to the protein-tyrosine phosphatase family. Non-receptor class dual specificity subfamily.

It carries out the reaction O-phospho-L-tyrosyl-[protein] + H2O = L-tyrosyl-[protein] + phosphate. The enzyme catalyses O-phospho-L-seryl-[protein] + H2O = L-seryl-[protein] + phosphate. It catalyses the reaction O-phospho-L-threonyl-[protein] + H2O = L-threonyl-[protein] + phosphate. Its function is as follows. Involved in the inactivation of MAP kinases. Dephosphorylates ERK, JNK and p38 MAP-kinases. Plays a negative role in TCR signaling by dephosphorylating MAP3K7 adapter TAB1 leading to its inactivation. This chain is Dual specificity protein phosphatase 14 (Dusp14), found in Mus musculus (Mouse).